The following is a 325-amino-acid chain: Post-GPI attachment to proteins factor 2-like (325 aa).

A run of 6 helical transmembrane segments spans residues 80–100 (VVTALLPLVTLFTCFVTAYVF), 130–150 (YFWRFSIALHIGPRIPIAFVY), 171–191 (LLITLILVLNCIEIASLGGVT), 205–225 (IFITFMVCSLCYMLATIKLNG), 243–263 (WKKILFAVSILSTVGLLVFFA), and 276–296 (WFAFFEYLIAIANMLFHFTII).

This sequence belongs to the PGAP2 family.

The protein localises to the membrane. The polypeptide is Post-GPI attachment to proteins factor 2-like (Drosophila melanogaster (Fruit fly)).